The following is a 206-amino-acid chain: Cytochrome c (206 aa).

The next 3 helical transmembrane spans lie at 10-30 (IALA…VSFL), 49-69 (FMGW…LGKM), and 76-96 (KWFL…FLSL). The heme site is built by Cys-152, Cys-155, His-156, and Met-182.

As to quaternary structure, monomer. Component of the photosynthetic reaction center composed of protein subunits PscA, PscC, PscB and PscD. The reaction center interacts with FmoA (which forms the Fenna-Matthews-Olson (FMO) complex). The reaction center/FmoA complex has two PscA subunits, one PscB and one PscD subunit, probably two FmoA complexes and at least one PscC subunit. In terms of processing, binds 1 heme group per subunit.

The protein localises to the cell inner membrane. Monoheme cytochrome which is the immediate electron donor to P840 of the photosynthetic reaction center complex. The polypeptide is Cytochrome c (pscC) (Chlorobaculum tepidum (strain ATCC 49652 / DSM 12025 / NBRC 103806 / TLS) (Chlorobium tepidum)).